Here is a 289-residue protein sequence, read N- to C-terminus: Poly-beta-1,6-N-acetyl-D-glucosamine N-deacetylase (289 aa).

The N-terminal stretch at 1 to 30 (MKPFKLIFISALMILIMTNATPISHLNAQA) is a signal peptide. Residues 113–289 (RSVWINFDDM…KEWDGFDEEK (177 aa)) form the NodB homology domain.

This sequence belongs to the polysaccharide deacetylase family.

The protein localises to the secreted. It is found in the cell wall. Catalyzes the N-deacetylation of poly-beta-1,6-N-acetyl-D-glucosamine (PNAG, also referred to as PIA), a biofilm adhesin polysaccharide. In fact, the IcaB deacetylase converts 15 to 20% of the GlcNAc residues of PNAG to glucosamine. N-deacetylation is crucial for attachment of the polysaccharide to the bacterial cell surface; it leads to the introduction of positive charges in the otherwise neutral PIA polymer, allowing electrostatic interactions. Deacetylation of the polymer is also essential for key virulence mechanisms of S.epidermidis, namely biofilm formation, colonization, and resistance to neutrophil phagocytosis and human antibacterial peptides. The protein is Poly-beta-1,6-N-acetyl-D-glucosamine N-deacetylase (icaB) of Staphylococcus epidermidis (strain ATCC 35984 / DSM 28319 / BCRC 17069 / CCUG 31568 / BM 3577 / RP62A).